Consider the following 1036-residue polypeptide: uncharacterized protein (1036 aa).

The signal sequence occupies residues 1 to 24 (MKRVGLIGVIMAALLVISATPVMA). A helical membrane pass occupies residues 1011–1033 (GGGVPGFEAVFAIAGLLAVAYLL).

It localises to the membrane. This is an uncharacterized protein from Archaeoglobus fulgidus (strain ATCC 49558 / DSM 4304 / JCM 9628 / NBRC 100126 / VC-16).